A 248-amino-acid polypeptide reads, in one-letter code: MAGHSQFKNIMHRKGRQDAVRSKMFSKLAREITVAAKAGLPDPTMNARLRLAIQNAKAQSMPKDNIDRAIKKAAGADGENYDEVRYEGYGPGGTAIIVEALTDNRNRTASNVRSSFTKAGGALGETGSVSFSFDHVGEITYKLSVGDGDKVMEAAIEAGADDVESDEDGHYITCAFEALGEVAKALESSLGEAETVKAVWRAQNNVPVDEEKAQSLLKLIDSLEDDDDVQNVYSNFEVSEEVLAKLSA.

Belongs to the TACO1 family.

The protein resides in the cytoplasm. The sequence is that of Probable transcriptional regulatory protein RL3983 from Rhizobium johnstonii (strain DSM 114642 / LMG 32736 / 3841) (Rhizobium leguminosarum bv. viciae).